Consider the following 60-residue polypeptide: Insect toxin mu-NPTX-Nc1a (60 aa).

The first 19 residues, 1–19, serve as a signal peptide directing secretion; it reads MIYQVVLLLLVSPAPVSAA.

In terms of processing, contains 4 disulfide bonds. As to expression, expressed by the venom gland.

It localises to the secreted. Functionally, insect-specific toxin. Blocks voltage-gated potassium and sodium channels. This Trichonephila clavata (Joro spider) protein is Insect toxin mu-NPTX-Nc1a.